The chain runs to 796 residues: Protein translocase subunit SecA 2 (796 aa).

ATP is bound by residues Gln-84, 102-106 (GEGKT), and Asp-496.

This sequence belongs to the SecA family. As to quaternary structure, monomer and homodimer. Part of the essential Sec protein translocation apparatus which comprises SecA, SecYEG and auxiliary proteins SecDF. Other proteins may also be involved.

The protein resides in the cell membrane. It is found in the cytoplasm. The catalysed reaction is ATP + H2O + cellular proteinSide 1 = ADP + phosphate + cellular proteinSide 2.. Part of the Sec protein translocase complex. Interacts with the SecYEG preprotein conducting channel. Has a central role in coupling the hydrolysis of ATP to the transfer of proteins into and across the cell membrane, serving as an ATP-driven molecular motor driving the stepwise translocation of polypeptide chains across the membrane. The sequence is that of Protein translocase subunit SecA 2 from Staphylococcus epidermidis (strain ATCC 35984 / DSM 28319 / BCRC 17069 / CCUG 31568 / BM 3577 / RP62A).